A 479-amino-acid polypeptide reads, in one-letter code: Poly(A) polymerase catalytic subunit (479 aa).

Residues Asp202 and Asp204 contribute to the active site. Residues Asp202, Asp204, and Asp253 each coordinate Ca(2+).

Belongs to the poxviridae poly(A) polymerase catalytic subunit family. As to quaternary structure, heterodimer of a large (catalytic) subunit and a small (regulatory) subunit.

The enzyme catalyses RNA(n) + ATP = RNA(n)-3'-adenine ribonucleotide + diphosphate. In terms of biological role, polymerase that creates the 3'-poly(A) tail of mRNA's. The chain is Poly(A) polymerase catalytic subunit (OPG063) from Bos taurus (Bovine).